Here is a 640-residue protein sequence, read N- to C-terminus: ATP-dependent DNA helicase YoaA (640 aa).

Residues 16 to 278 enclose the Helicase ATP-binding domain; the sequence is ELSQNIKGFR…KDMQQLGTTS (263 aa). An ATP-binding site is contributed by 51 to 58; sequence AGTGTGKT. Position 114 (Cys-114) interacts with [4Fe-4S] cluster. The DEAH box signature appears at 125 to 128; that stretch reads GVLG. Positions 174, 179, and 185 each coordinate [4Fe-4S] cluster. Residues 231–234 carry the DEAH box motif; the sequence is DEAH. In terms of domain architecture, Helicase C-terminal spans 458–634; sequence SLGEILLPVI…SRTRDLNKVI (177 aa).

Belongs to the helicase family. DinG subfamily. It depends on [4Fe-4S] cluster as a cofactor.

It catalyses the reaction Couples ATP hydrolysis with the unwinding of duplex DNA at the replication fork by translocating in the 5'-3' direction. This creates two antiparallel DNA single strands (ssDNA). The leading ssDNA polymer is the template for DNA polymerase III holoenzyme which synthesizes a continuous strand.. The catalysed reaction is ATP + H2O = ADP + phosphate + H(+). Probably a 5'-3' DNA helicase. The protein is ATP-dependent DNA helicase YoaA of Haemophilus influenzae (strain ATCC 51907 / DSM 11121 / KW20 / Rd).